The sequence spans 274 residues: Putative homeobox protein Meis3-like 1 (274 aa).

The MEIS N-terminal domain occupies glycine 12–lysine 65. Disordered regions lie at residues aspartate 108–isoleucine 167 and asparagine 228–glutamate 248. The segment covering glycine 123–glutamine 135 has biased composition (polar residues). A DNA-binding region (homeobox) is located at residues arginine 161–methionine 223.

It belongs to the TALE/MEIS homeobox family.

Its subcellular location is the nucleus. In Homo sapiens (Human), this protein is Putative homeobox protein Meis3-like 1 (MEIS3P1).